Reading from the N-terminus, the 329-residue chain is 4-hydroxythreonine-4-phosphate dehydrogenase (329 aa).

Substrate contacts are provided by H136 and T137. A divalent metal cation-binding residues include H166, H211, and H266. 3 residues coordinate substrate: K274, N283, and R292.

The protein belongs to the PdxA family. As to quaternary structure, homodimer. The cofactor is Zn(2+). Mg(2+) serves as cofactor. It depends on Co(2+) as a cofactor.

Its subcellular location is the cytoplasm. It catalyses the reaction 4-(phosphooxy)-L-threonine + NAD(+) = 3-amino-2-oxopropyl phosphate + CO2 + NADH. Its pathway is cofactor biosynthesis; pyridoxine 5'-phosphate biosynthesis; pyridoxine 5'-phosphate from D-erythrose 4-phosphate: step 4/5. In terms of biological role, catalyzes the NAD(P)-dependent oxidation of 4-(phosphooxy)-L-threonine (HTP) into 2-amino-3-oxo-4-(phosphooxy)butyric acid which spontaneously decarboxylates to form 3-amino-2-oxopropyl phosphate (AHAP). In Shigella boydii serotype 4 (strain Sb227), this protein is 4-hydroxythreonine-4-phosphate dehydrogenase.